Reading from the N-terminus, the 223-residue chain is MNMKNLYLAILYLLAASTLPFAIASDPSPLQDFCIGVNTPANALFVNGKFCKDPKLVTADDFYFSGLDKARTTESSPVGSNVTTVNVNQIPGLNTLGISLVRIDYGINGQNPPHTHPRATEILLVQEGTLFVGFFSSFPENRLFNKTLNKGDVFVFPEGLIHFQVNIGKQPAVAFASLSSQNPGVIIIGNTLFGSKPPIDPNVLAKAFQLDPKVIIQLQKKFG.

An N-terminal signal peptide occupies residues methionine 1–alanine 24. The cysteines at positions 34 and 51 are disulfide-linked. One can recognise a Cupin type-1 domain in the interval serine 65–isoleucine 216. N-linked (GlcNAc...) asparagine glycosylation occurs at asparagine 81. The Mn(2+) site is built by histidine 114, histidine 116, and glutamate 121. A glycan (N-linked (GlcNAc...) asparagine) is linked at asparagine 145. Histidine 162 serves as a coordination point for Mn(2+).

It belongs to the germin family. In terms of assembly, oligomer (believed to be a pentamer but probably hexamer).

It localises to the secreted. It is found in the extracellular space. Its subcellular location is the apoplast. Its function is as follows. May play a role in plant defense. Probably has no oxalate oxidase activity even if the active site is conserved. The sequence is that of Putative germin-like protein subfamily 1 member 12 from Arabidopsis thaliana (Mouse-ear cress).